The following is a 402-amino-acid chain: MEQKPSTLDPLSEPEDTRWLDGKRKRKSSQCLVKSSMSGYIPSYLDKDEQCVVCGDKATGYHYRCITCEGCKGFFRRTIQKNLHPTYSCKYDGCCVIDKITRNQCQLCRFKKCISVGMAMDLVLDDSKRVAKRKLIEENRERRRKEEMIKSLQHRPNPSAEEWELIHVVTEAHRSTNAQGSHWKQKRKFLPEDIGQSPMASMPDGDKVDLEAFSEFTKIITPAITRVVDFAKKLPMFSELPCEDQIILLKGCCMEIMSLRAAVRYDPESETLTLSGEMAVKREQLKNGGLGVVSDAIFDLGKSLSAFNLDDTEVALLQAVLLMSSDRTGLICVEKIEKCQETYLLAFEHYINYRKHNIPHFWPKLLMKVTDLRMIRACHASRFLHMKVECPTELFPPLFLEV.

Residues M1–G22 form a disordered region. A modulating region spans residues M1–Q50. Position 12 is a phosphoserine; by CK2 (S12). A Phosphoserine modification is found at S28. The Zn(2+) site is built by C51, C54, C68, C71, C89, C95, C105, and C108. 2 NR C4-type zinc fingers span residues C51 to C71 and C89 to C113. Positions C51–D125 form a DNA-binding region, nuclear receptor. The 242-residue stretch at E161–V402 folds into the NR LBD domain. 2 residues coordinate 3,3',5-triiodo-L-thyronine: R226 and S275.

This sequence belongs to the nuclear hormone receptor family. NR1 subfamily. As to quaternary structure, probably interacts with SFPQ.

The protein localises to the nucleus. In terms of biological role, nuclear hormone receptor that can act as a repressor or activator of transcription. High affinity receptor for thyroid hormones, including triiodothyronine and thyroxine. The protein is Thyroid hormone receptor alpha (THRA) of Aptenodytes patagonicus (King penguin).